A 517-amino-acid chain; its full sequence is ATP synthase subunit alpha (517 aa).

174–181 (GDRQTGKT) contacts ATP.

Belongs to the ATPase alpha/beta chains family. In terms of assembly, F-type ATPases have 2 components, CF(1) - the catalytic core - and CF(0) - the membrane proton channel. CF(1) has five subunits: alpha(3), beta(3), gamma(1), delta(1), epsilon(1). CF(0) has four main subunits: a(1), b(1), b'(1) and c(9-12).

The protein localises to the cell inner membrane. The enzyme catalyses ATP + H2O + 4 H(+)(in) = ADP + phosphate + 5 H(+)(out). In terms of biological role, produces ATP from ADP in the presence of a proton gradient across the membrane. The alpha chain is a regulatory subunit. This chain is ATP synthase subunit alpha, found in Methylibium petroleiphilum (strain ATCC BAA-1232 / LMG 22953 / PM1).